The sequence spans 326 residues: Regulation of nuclear pre-mRNA domain-containing protein 1B (326 aa).

The residue at position 2 (Ser2) is an N-acetylserine. Residues 2–133 form the CID domain; sequence SSFSESALEK…QLKLSMEDSK (132 aa). Positions 127 to 149 are disordered; sequence LSMEDSKSPPPKATEEKKSLKRT. Basic and acidic residues predominate over residues 128–144; the sequence is SMEDSKSPPPKATEEKK. A phosphoserine mark is found at Ser132 and Ser134. Tyr161 is subject to Phosphotyrosine. 2 positions are modified to phosphoserine: Ser166 and Ser299.

Belongs to the UPF0400 (RTT103) family. Homodimer. May form a heterodimer with RPRD1A. Associates with RPAP2. Associates with the RNA polymerase II complex. Preferentially expressed in a range of tumor tissues including colon, lung, liver, breast, prostate, stomach, uterine endometrium and cervical cancers with higher levels in tumors than in adjacent non-tumor tissue (at protein level).

The protein resides in the nucleus. Its function is as follows. Interacts with phosphorylated C-terminal heptapeptide repeat domain (CTD) of the largest RNA polymerase II subunit POLR2A, and participates in dephosphorylation of the CTD by RPAP2. Transcriptional regulator which enhances expression of CCND1. Promotes binding of RNA polymerase II to the CCDN1 promoter and to the termination region before the poly-A site but decreases its binding after the poly-A site. Prevents RNA polymerase II from reading through the 3' end termination site and may allow it to be recruited back to the promoter through promotion of the formation of a chromatin loop. Also enhances the transcription of a number of other cell cycle-related genes including CDK2, CDK4, CDK6 and cyclin-E but not CDKN1A, CDKN1B or cyclin-A. Promotes cell proliferation. The protein is Regulation of nuclear pre-mRNA domain-containing protein 1B (RPRD1B) of Homo sapiens (Human).